The following is a 230-amino-acid chain: Orotidine 5'-phosphate decarboxylase (230 aa).

Residues D9, K31, 58-67 (DLKFFDIPNT), T120, R180, Q188, G208, and R209 contribute to the substrate site. Catalysis depends on K60, which acts as the Proton donor.

It belongs to the OMP decarboxylase family. Type 1 subfamily. In terms of assembly, homodimer.

The enzyme catalyses orotidine 5'-phosphate + H(+) = UMP + CO2. It functions in the pathway pyrimidine metabolism; UMP biosynthesis via de novo pathway; UMP from orotate: step 2/2. Catalyzes the decarboxylation of orotidine 5'-monophosphate (OMP) to uridine 5'-monophosphate (UMP). In Maridesulfovibrio salexigens (strain ATCC 14822 / DSM 2638 / NCIMB 8403 / VKM B-1763) (Desulfovibrio salexigens), this protein is Orotidine 5'-phosphate decarboxylase.